The following is a 353-amino-acid chain: uncharacterized protein (353 aa).

The Mn(2+) site is built by Asp-212, Asp-223, His-287, Glu-316, and Glu-330.

Belongs to the peptidase M24B family. Mn(2+) serves as cofactor.

This is an uncharacterized protein from Bacillus subtilis (strain 168).